The following is an 850-amino-acid chain: DEAD-box ATP-dependent RNA helicase 26 (850 aa).

Disordered regions lie at residues 60–82 (TRPERSQPEFARRSGAGGEIRAS) and 106–350 (GKFT…ENDE). Positions 61–71 (RPERSQPEFAR) are enriched in basic and acidic residues. The residue at position 109 (Thr-109) is a Phosphothreonine. A Phosphoserine modification is found at Ser-110. Composition is skewed to basic and acidic residues over residues 118–140 (EVVRRNVDRDTSRGPRRGREGQS) and 284–299 (GRNDRNVESGFRREPG). 2 stretches are compositionally biased toward acidic residues: residues 315–325 (LEEEDSSDDDE) and 336–350 (LPSEDSSDEDDENDE). The Q motif signature appears at 382-410 (TRFDQFPLSPLSLKAIKDAGFETMTVVQE). Positions 413–596 (LPIILQGKDV…HVALKRDHEF (184 aa)) constitute a Helicase ATP-binding domain. An ATP-binding site is contributed by 426 to 433 (AKTGTGKT). The short motif at 544–547 (DEAD) is the DEAD box element. In terms of domain architecture, Helicase C-terminal spans 630-777 (LLKEHIADNV…IDPEAVKRVQ (148 aa)).

This sequence belongs to the DEAD box helicase family.

It carries out the reaction ATP + H2O = ADP + phosphate + H(+). The polypeptide is DEAD-box ATP-dependent RNA helicase 26 (RH26) (Arabidopsis thaliana (Mouse-ear cress)).